Consider the following 133-residue polypeptide: DNA-binding protein inhibitor ID-2-A (133 aa).

In terms of domain architecture, bHLH spans 23–75; it reads ARSKTPVDDPMSLLYNMNDCYSKLKELVPSIPQNKKVSKMEILQHVIDYILDL. The short motif at 106-115 is the Nuclear export signal element; sequence LNTDISILSL.

As to quaternary structure, heterodimer with other HLH proteins. In the embryo, expressed in a range of tissues, with primary expression in the developing pronephros; expressed in the pronephric anlage, and by the swimming tadpole stages expressed robustly in the pronephric tubules and weakly in the pronephric duct. Expressed in the secondary heart field. In the developing nervous system, expressed in the neural crest and in the neural folds during neurula stages, and at stage 20 in the neural tube, ventral mesoderm and mid-hindbrain boundary. By early tailbud stages, expressed in the neural tube, somites and branchial arches. In tadpoles (stage 37/38), expressed in the heart, eye, otic vesicle, somites and branchial arches. Also expressed in migrating muscle cells. Expressed at a low level in limbs, with expression decreasing as limbs develop, but expressed at a high level in blastemas (regenerated limbs), where expression is localized primarily to the blastemal epidermis. Widely expressed in adults with highest expression in the spleen, skin, intestine and brain, and at a much lower level in testis and heart.

It is found in the cytoplasm. The protein resides in the nucleus. Functionally, transcriptional regulator (lacking a basic DNA binding domain) which negatively regulates the basic helix-loop-helix (bHLH) transcription factors by forming heterodimers and inhibiting their DNA binding and transcriptional activity. Inhibits the activity of both neurogenic (neurod1/neuroD) and myogenic (myod1/myoD) bHLH factors. May play a role in the regulation of the circadian clock. This is DNA-binding protein inhibitor ID-2-A (id2-a) from Xenopus laevis (African clawed frog).